The chain runs to 164 residues: Large ribosomal subunit protein uL11 (164 aa).

It belongs to the universal ribosomal protein uL11 family. Part of the ribosomal stalk of the 50S ribosomal subunit. Interacts with L10 and the large rRNA to form the base of the stalk. L10 forms an elongated spine to which L12 dimers bind in a sequential fashion forming a multimeric L10(L12)X complex.

In terms of biological role, forms part of the ribosomal stalk which helps the ribosome interact with GTP-bound translation factors. The polypeptide is Large ribosomal subunit protein uL11 (Pyrococcus furiosus (strain ATCC 43587 / DSM 3638 / JCM 8422 / Vc1)).